The following is a 319-amino-acid chain: UPF0761 membrane protein PBPRA3489 (319 aa).

6 helical membrane passes run L50 to L70, V107 to L127, F143 to V163, A188 to L208, A215 to L235, and A249 to L269.

The protein belongs to the UPF0761 family.

Its subcellular location is the cell inner membrane. The protein is UPF0761 membrane protein PBPRA3489 of Photobacterium profundum (strain SS9).